The following is a 275-amino-acid chain: Nitrate import permease protein NrtB (275 aa).

Helical transmembrane passes span Val25 to Gly45, Val89 to Ser109, Ile120 to Leu140, Ala147 to Ala167, Phe189 to Ile209, Trp213 to Trp233, and Ser238 to Leu258. The ABC transmembrane type-1 domain occupies Ile82–Ile262.

Belongs to the binding-protein-dependent transport system permease family. CysTW subfamily. In terms of assembly, the complex is composed of two ATP-binding proteins (NrtC and NrtD), two transmembrane proteins (NrtB) and a solute-binding protein (NrtA).

The protein resides in the cell inner membrane. In terms of biological role, part of the ABC transporter complex NrtABCD involved in nitrate uptake. The complex is probably also involved in nitrite transport. Probably responsible for the translocation of the substrate across the membrane. The sequence is that of Nitrate import permease protein NrtB (nrtB) from Synechocystis sp. (strain ATCC 27184 / PCC 6803 / Kazusa).